Consider the following 249-residue polypeptide: Isoprenyl transferase (249 aa).

Aspartate 29 is a catalytic residue. Aspartate 29 lines the Mg(2+) pocket. Residues 30–33, tryptophan 34, arginine 42, histidine 46, and 74–76 each bind substrate; these read GNGR and STE. Asparagine 77 functions as the Proton acceptor in the catalytic mechanism. Residues tryptophan 78, arginine 80, arginine 197, and 203–205 each bind substrate; that span reads RLS. Glutamate 216 serves as a coordination point for Mg(2+).

Belongs to the UPP synthase family. As to quaternary structure, homodimer. Requires Mg(2+) as cofactor.

Functionally, catalyzes the condensation of isopentenyl diphosphate (IPP) with allylic pyrophosphates generating different type of terpenoids. This chain is Isoprenyl transferase, found in Trichormus variabilis (strain ATCC 29413 / PCC 7937) (Anabaena variabilis).